We begin with the raw amino-acid sequence, 354 residues long: 3-isopropylmalate dehydrogenase (354 aa).

4 residues coordinate substrate: arginine 96, arginine 106, arginine 132, and aspartate 223. Aspartate 223, aspartate 247, and aspartate 251 together coordinate Mg(2+). 283–295 (GSAPDIAGQGKAD) contributes to the NAD(+) binding site.

It belongs to the isocitrate and isopropylmalate dehydrogenases family. LeuB type 2 subfamily. As to quaternary structure, homodimer. Requires Mg(2+) as cofactor. It depends on Mn(2+) as a cofactor.

It is found in the cytoplasm. It carries out the reaction (2R,3S)-3-isopropylmalate + NAD(+) = 4-methyl-2-oxopentanoate + CO2 + NADH. Its pathway is amino-acid biosynthesis; L-leucine biosynthesis; L-leucine from 3-methyl-2-oxobutanoate: step 3/4. Catalyzes the oxidation of 3-carboxy-2-hydroxy-4-methylpentanoate (3-isopropylmalate) to 3-carboxy-4-methyl-2-oxopentanoate. The product decarboxylates to 4-methyl-2 oxopentanoate. This is 3-isopropylmalate dehydrogenase from Thermobifida fusca (strain YX).